A 180-amino-acid chain; its full sequence is Crossover junction endodeoxyribonuclease RuvC (180 aa).

Active-site residues include aspartate 7, glutamate 66, and aspartate 138. Residues aspartate 7, glutamate 66, and aspartate 138 each contribute to the Mg(2+) site.

It belongs to the RuvC family. In terms of assembly, homodimer which binds Holliday junction (HJ) DNA. The HJ becomes 2-fold symmetrical on binding to RuvC with unstacked arms; it has a different conformation from HJ DNA in complex with RuvA. In the full resolvosome a probable DNA-RuvA(4)-RuvB(12)-RuvC(2) complex forms which resolves the HJ. It depends on Mg(2+) as a cofactor.

It localises to the cytoplasm. It catalyses the reaction Endonucleolytic cleavage at a junction such as a reciprocal single-stranded crossover between two homologous DNA duplexes (Holliday junction).. In terms of biological role, the RuvA-RuvB-RuvC complex processes Holliday junction (HJ) DNA during genetic recombination and DNA repair. Endonuclease that resolves HJ intermediates. Cleaves cruciform DNA by making single-stranded nicks across the HJ at symmetrical positions within the homologous arms, yielding a 5'-phosphate and a 3'-hydroxyl group; requires a central core of homology in the junction. The consensus cleavage sequence is 5'-(A/T)TT(C/G)-3'. Cleavage occurs on the 3'-side of the TT dinucleotide at the point of strand exchange. HJ branch migration catalyzed by RuvA-RuvB allows RuvC to scan DNA until it finds its consensus sequence, where it cleaves and resolves the cruciform DNA. This is Crossover junction endodeoxyribonuclease RuvC from Burkholderia pseudomallei (strain 668).